The sequence spans 402 residues: Tyrosine--tRNA ligase (402 aa).

Residues 47-56 (PTAPDLHLGH) carry the 'HIGH' region motif. Positions 232 to 236 (KMSKS) match the 'KMSKS' region motif. Lys-235 provides a ligand contact to ATP. The 61-residue stretch at 341–401 (VGILDVLKQI…GKKRFMKLNI (61 aa)) folds into the S4 RNA-binding domain.

Belongs to the class-I aminoacyl-tRNA synthetase family. TyrS type 2 subfamily. In terms of assembly, homodimer.

It is found in the cytoplasm. It carries out the reaction tRNA(Tyr) + L-tyrosine + ATP = L-tyrosyl-tRNA(Tyr) + AMP + diphosphate + H(+). Functionally, catalyzes the attachment of tyrosine to tRNA(Tyr) in a two-step reaction: tyrosine is first activated by ATP to form Tyr-AMP and then transferred to the acceptor end of tRNA(Tyr). This Helicobacter pylori (strain ATCC 700392 / 26695) (Campylobacter pylori) protein is Tyrosine--tRNA ligase.